The sequence spans 654 residues: Protein fem-1 homolog A-A (654 aa).

ANK repeat units lie at residues 2-31, 40-70, 82-111, 115-145, 149-178, 182-211, and 214-243; these read DLHTAVYNAAHDGKLPLLQKLLAGRGREEL, GGGTPLLIAARRGHLDVVEYLVDHCGASVEA, EGAPPLWAASAAGHLAVVRSLLRRGASVNR, TNSTPLRAACFDGHLDVVRYLVGEHKADLEV, HGHTCLMISCYKGHREIARYLLERGAQVNR, KGNTALHDCAESGSLEILQLLLGCHARMER, and YGMTPLLAASVTGHTNIVEYLIQEQPGHEQ. Ser-108 carries the post-translational modification Phosphoserine. The disordered stretch occupies residues 242 to 265; sequence EQLSGTELPGEGSSQVAGNHCSTP. Positions 253–263 are enriched in polar residues; that stretch reads GSSQVAGNHCS. 2 TPR repeats span residues 283-317 and 375-408; these read VEALELLGATYVDKKRDLLGALKHWRRAMELRHQG and SYYIRYRGAVYADSGNFERCIRLWKYALDMQQNN. ANK repeat units lie at residues 519–561 and 565–594; these read NGFT…DPDS and DNNTPLHIAAQNNCPAIMDALIEAGAHMDA. At Ser-608 the chain carries Phosphoserine.

Belongs to the fem-1 family. As to quaternary structure, component of a CRL2 E3 ubiquitin-protein ligase complex, also named ECS (Elongin BC-CUL2/5-SOCS-box protein) complex, composed of CUL2, Elongin BC (ELOB and ELOC), RBX1 and substrate-specific adapter FEM1A. Interacts with PTGER4. Interacts with NFKB1; the interaction is direct. Phosphorylated; highly phosphorylated in myoblasts and myotubes. Phosphorylation at Ser-108 and Ser-608 promote PGE2-EP4-mediated inhibition of inflammation. Dephosphorylated by protein phosphatase 2A (PP2A). Preferentially expressed in cardiac muscle, brain and liver (at protein level). Also expressed in skeletal muscle.

It is found in the mitochondrion. It localises to the cytoplasm. It functions in the pathway protein modification; protein ubiquitination. In terms of biological role, substrate-recognition component of a Cul2-RING (CRL2) E3 ubiquitin-protein ligase complex of the DesCEND (destruction via C-end degrons) pathway, which recognizes a C-degron located at the extreme C terminus of target proteins, leading to their ubiquitination and degradation. The C-degron recognized by the DesCEND pathway is usually a motif of less than ten residues and can be present in full-length proteins, truncated proteins or proteolytically cleaved forms. The CRL2(FEM1A) complex specifically recognizes proteins with an arginine at the C-terminus: recognizes and binds proteins ending with -Lys/Arg-Xaa-Arg and -Lys/Arg-Xaa-Xaa-Arg C-degrons, such as SIL1 or OR51B2, leading to their ubiquitination and degradation. Involved in PGE2-EP4-mediated inhibition of inflammation of macrophages via interaction with NFKB1 and PTGER4. Promotes inflammation in brain microglia through MAP2K4/MKK4-mediated signaling. This Mus musculus (Mouse) protein is Protein fem-1 homolog A-A.